A 280-amino-acid chain; its full sequence is Mevalonyl-coenzyme A hydratase SIDH (280 aa).

The PTS1-type peroxisomal targeting signal signature appears at serine 278–leucine 280.

It belongs to the enoyl-CoA hydratase/isomerase family.

The protein localises to the peroxisome. It functions in the pathway siderophore biosynthesis. Its function is as follows. Mevalonyl-coenzyme A hydratase; part of the gene cluster that mediates the biosynthesis of at least 11 siderophores, including beauverichelin A, dimerumic acid (DA), Na-dimethyl coprogen (NADC), eleutherazine B, ferricrocin (FC), fusarinine A, fusarinine C (FsC), metachelin A, mevalonolactone, rhodotorulic acid (RA) and tenellin. This cocktail of siderophores for iron metabolism is essential for virulence, and more specifically for the fungal virulence in penetrating through the host cuticle. Siderophore synthesis is also involved in conidial germination under iron-deficient conditions. For biosynthesis of fusarinine C, the transacylase SIDF transfers anhydromevalonyl to N(5)-hydroxyornithine. The required anhydromevalonyl-CoA moiety is derived from mevalonate by CoA ligation and dehydration catalyzed by SIDI and sidH respectively. SIDH is not essential for siderophore production, probably due to functional redundancy of this protein family, as there are 15 homologs of SIDH in B.bassiana. In Beauveria bassiana (strain ARSEF 2860) (White muscardine disease fungus), this protein is Mevalonyl-coenzyme A hydratase SIDH.